A 1075-amino-acid polypeptide reads, in one-letter code: Carbamoyl phosphate synthase large chain (1075 aa).

The interval 2-403 (PKRTDIKSIL…SLQKALRGLE (402 aa)) is carboxyphosphate synthetic domain. Residues arginine 129, arginine 169, glycine 175, glycine 176, glutamate 208, leucine 210, glutamate 215, glycine 241, isoleucine 242, histidine 243, glutamine 285, and glutamate 299 each contribute to the ATP site. The 196-residue stretch at 133–328 (DIAMKKIGLD…IAKVAAKLAV (196 aa)) folds into the ATP-grasp 1 domain. Residues glutamine 285, glutamate 299, and asparagine 301 each contribute to the Mg(2+) site. Glutamine 285, glutamate 299, and asparagine 301 together coordinate Mn(2+). The tract at residues 404 to 553 (VGATGFDPKV…YSTYEDECEA (150 aa)) is oligomerization domain. The tract at residues 554–936 (NPSIDRDKIM…AFAKAQLGSN (383 aa)) is carbamoyl phosphate synthetic domain. Residues 679-870 (QHAVDRLKLK…LAKVAARVMA (192 aa)) enclose the ATP-grasp 2 domain. Positions 715, 754, 756, 761, 786, 787, 788, 789, 829, and 841 each coordinate ATP. Glutamine 829, glutamate 841, and asparagine 843 together coordinate Mg(2+). Glutamine 829, glutamate 841, and asparagine 843 together coordinate Mn(2+). Residues 937–1075 (STMKKQGRAL…QEMHAQIKKS (139 aa)) enclose the MGS-like domain. The interval 937–1075 (STMKKQGRAL…QEMHAQIKKS (139 aa)) is allosteric domain.

This sequence belongs to the CarB family. As to quaternary structure, composed of two chains; the small (or glutamine) chain promotes the hydrolysis of glutamine to ammonia, which is used by the large (or ammonia) chain to synthesize carbamoyl phosphate. Tetramer of heterodimers (alpha,beta)4. Mg(2+) serves as cofactor. Requires Mn(2+) as cofactor.

The catalysed reaction is hydrogencarbonate + L-glutamine + 2 ATP + H2O = carbamoyl phosphate + L-glutamate + 2 ADP + phosphate + 2 H(+). The enzyme catalyses hydrogencarbonate + NH4(+) + 2 ATP = carbamoyl phosphate + 2 ADP + phosphate + 2 H(+). It functions in the pathway amino-acid biosynthesis; L-arginine biosynthesis; carbamoyl phosphate from bicarbonate: step 1/1. Its pathway is pyrimidine metabolism; UMP biosynthesis via de novo pathway; (S)-dihydroorotate from bicarbonate: step 1/3. Large subunit of the glutamine-dependent carbamoyl phosphate synthetase (CPSase). CPSase catalyzes the formation of carbamoyl phosphate from the ammonia moiety of glutamine, carbonate, and phosphate donated by ATP, constituting the first step of 2 biosynthetic pathways, one leading to arginine and/or urea and the other to pyrimidine nucleotides. The large subunit (synthetase) binds the substrates ammonia (free or transferred from glutamine from the small subunit), hydrogencarbonate and ATP and carries out an ATP-coupled ligase reaction, activating hydrogencarbonate by forming carboxy phosphate which reacts with ammonia to form carbamoyl phosphate. In Salmonella typhimurium (strain LT2 / SGSC1412 / ATCC 700720), this protein is Carbamoyl phosphate synthase large chain.